Reading from the N-terminus, the 463-residue chain is Heterogeneous nuclear ribonucleoprotein K (463 aa).

Met1 carries the N-acetylmethionine modification. The disordered stretch occupies residues 1 to 37 (METEQPEETFPNTETNGEFGKRPAEDMEEEQAFKRSR). The necessary for interaction with DDX1 stretch occupies residues 1–276 (METEQPEETF…GRGGRPMPPS (276 aa)). A compositionally biased stretch (basic and acidic residues) spans 19–37 (FGKRPAEDMEEEQAFKRSR). Lys34 bears the N6-acetyllysine; alternate mark. Lys34 is covalently cross-linked (Glycyl lysine isopeptide (Lys-Gly) (interchain with G-Cter in SUMO1); alternate). Lys34 is covalently cross-linked (Glycyl lysine isopeptide (Lys-Gly) (interchain with G-Cter in SUMO2); alternate). Ser36 is modified (phosphoserine). Thr39 is subject to Phosphothreonine. Residues 42–104 (MVELRILLQS…ETIGEILKKI (63 aa)) enclose the KH 1 domain. Glycyl lysine isopeptide (Lys-Gly) (interchain with G-Cter in SUMO2) cross-links involve residues Lys52 and Lys60. 2 repeat units span residues 54 to 76 (AGAV…NASV) and 59 to 62 (GKGG). The tract at residues 54-421 (AGAVIGKGGK…QIRHESGASI (368 aa)) is 2 X 22 AA approximate repeats. The interval 59 to 407 (GKGGKNIKAL…LAGSIIGKGG (349 aa)) is 5 X 4 AA repeats of G-X-G-G. Phosphoserine occurs at positions 75 and 116. In terms of domain architecture, KH 2 spans 144-209 (DCELRLLIHQ…DRVVECIKII (66 aa)). A Glycyl lysine isopeptide (Lys-Gly) (interchain with G-Cter in SUMO1); alternate cross-link involves residue Lys163. A Glycyl lysine isopeptide (Lys-Gly) (interchain with G-Cter in SUMO2); alternate cross-link involves residue Lys163. Lys198 is subject to N6-acetyllysine. The tract at residues 209–337 (ILDLISESPI…RPGDRYDGMV (129 aa)) is interaction with ZIK1. A phosphoserine mark is found at Ser214 and Ser216. A Glycyl lysine isopeptide (Lys-Gly) (interchain with G-Cter in SUMO2); alternate cross-link involves residue Lys219. Lys219 carries the post-translational modification N6-succinyllysine; alternate. Residues 236-273 (YGGFTMMFDDRRGRPVGFPMRGRGGFDRMPPGRGGRPM) are RNA-binding RGG-box. Tandem repeats lie at residues 245–250 (DRRGRP), 257–260 (GRGG), and 267–270 (GRGG). Residues 245-329 (DRRGRPVGFP…LMAYDRRGRP (85 aa)) are 2 X 6 AA repeats of D-R-R-G-R-P. The tract at residues 250 to 329 (PVGFPMRGRG…LMAYDRRGRP (80 aa)) is disordered. The segment covering 252–266 (GFPMRGRGGFDRMPP) has biased composition (low complexity). A compositionally biased stretch (basic and acidic residues) spans 276 to 285 (SRRDYDDMSP). Ser284 carries the phosphoserine modification. The stretch at 295-298 (GRGG) is one 3-4 repeat. Residue Arg316 is modified to Omega-N-methylarginine. Residues 324-329 (DRRGRP) form a 2-2 repeat. At Arg377 the chain carries Omega-N-methylarginine. Ser379 is modified (phosphoserine). The residue at position 380 (Tyr380) is a Phosphotyrosine. Residues 387-451 (IITTQVTIPK…DQIQNAQYLL (65 aa)) enclose the KH 3 domain. Repeat copies occupy residues 399-421 (AGSI…GASI) and 404-407 (GKGG). The residue at position 405 (Lys405) is an N6-acetyllysine; alternate. Lys405 is covalently cross-linked (Glycyl lysine isopeptide (Lys-Gly) (interchain with G-Cter in SUMO2); alternate). Ser420 bears the Phosphoserine mark. Lys422 is covalently cross-linked (Glycyl lysine isopeptide (Lys-Gly) (interchain with G-Cter in SUMO1); alternate). Lys422 is covalently cross-linked (Glycyl lysine isopeptide (Lys-Gly) (interchain with G-Cter in SUMO2); alternate). Residue Lys422 forms a Glycyl lysine isopeptide (Lys-Gly) (interchain with G-Cter in SUMO); alternate linkage.

Identified in the spliceosome C complex. Interacts with ANKRD28, RBM42 and ZIK1. Interacts with DDX1. Interacts with MDM2; this interaction leads to ubiquitination and proteasomal degradation. Interacts with p53/TP53. Interacts with BRDT. Interacts with IVNS1ABP. Interacts with PPIA/CYPA. Part of a transcription inhibitory ribonucleoprotein complex composed at least of the circular RNA circZNF827, ZNF827 and HNRNPL. Sumoylated by CBX4. Sumoylation is increased upon DNA damage, such as that produced by doxorubicin, etoposide, UV light and camptothecin, due to enhanced CBX4 phosphorylation by HIPK2 under these conditions. In terms of processing, ubiquitinated by MDM2. Doxorubicin treatment does not affect monoubiquitination, but slightly decreases HNRNPK poly-ubiquitination. Post-translationally, O-glycosylated (O-GlcNAcylated), in a cell cycle-dependent manner.

It localises to the cytoplasm. The protein resides in the nucleus. It is found in the nucleoplasm. Its subcellular location is the cell projection. The protein localises to the podosome. Functionally, one of the major pre-mRNA-binding proteins. Binds tenaciously to poly(C) sequences. Likely to play a role in the nuclear metabolism of hnRNAs, particularly for pre-mRNAs that contain cytidine-rich sequences. Can also bind poly(C) single-stranded DNA. Plays an important role in p53/TP53 response to DNA damage, acting at the level of both transcription activation and repression. When sumoylated, acts as a transcriptional coactivator of p53/TP53, playing a role in p21/CDKN1A and 14-3-3 sigma/SFN induction. As far as transcription repression is concerned, acts by interacting with long intergenic RNA p21 (lincRNA-p21), a non-coding RNA induced by p53/TP53. This interaction is necessary for the induction of apoptosis, but not cell cycle arrest. As part of a ribonucleoprotein complex composed at least of ZNF827, HNRNPL and the circular RNA circZNF827 that nucleates the complex on chromatin, may negatively regulate the transcription of genes involved in neuronal differentiation. The polypeptide is Heterogeneous nuclear ribonucleoprotein K (HNRNPK) (Oryctolagus cuniculus (Rabbit)).